A 314-amino-acid chain; its full sequence is THAP domain-containing protein 11 (314 aa).

The THAP-type zinc finger occupies 1 to 80 (MPGFTCCVPG…TYTVRVPTIF (80 aa)). A disordered region spans residues 85–111 (VNERKVARRPAGAAAARRRQQQQQQQQ). Positions 93 to 111 (RPAGAAAARRRQQQQQQQQ) are enriched in low complexity. The short motif at 243 to 246 (DHSY) is the HCFC1-binding motif (HBM) element. Residues 255-305 (EELLRKLNEQRDILALMEVKMKEMKGSIRHLRLTEAKLREELREKDRLLAM) are a coiled coil.

The protein belongs to the THAP11 family. Forms homodimers. Interacts via HBM with HCFC1. Forms a complex with HCFC1 and ZNF143. As to expression, expressed in skin fibroblasts.

The protein localises to the nucleus. The protein resides in the cytoplasm. Its function is as follows. Transcription factor, which has both transcriptional activation and repression activities. Also modulates chromatin accessibility. In complex with HCFC1 and ZNF143, regulates the expression of several genes, including AP2S1, ESCO2, OPHN1, RBL1, UBXN8 and ZNF32. May regulate the expression of genes that encode both cytoplasmic and mitochondrial ribosomal proteins. Required for normal mitochondrial development and function. Regulates mitochondrial gene expression, including that of components of the electron transport chain. Involved in the maintainance of pluripotency in early embryonic cells, possibly through its action on mitochondrial maturation which is required to meet high energy demands of these cells. Required for early development of retina, preventing premature exit of retinal progenitor cells from the cell cycle. This effect may also be mediated by its action on mitochondria. Through the regulation of MMACHC gene expression, controls cobalamin metabolism. Required for normal brain development and neural precursor differentiation. Involved in cell growth. This Homo sapiens (Human) protein is THAP domain-containing protein 11 (THAP11).